Here is a 415-residue protein sequence, read N- to C-terminus: MMMTQRISPSNKRRRVSFVRDFPQFSVKDESDIGGDDVATIKENLDGKEDSNCVGVAYRDHHRPKEESFDSIMKKAGFNVANGNLGNGKFPPSKRNVPLPCEGKVQPLSVEEGIKLMAYESQRRRCFGKPLVSTKVVQKHRYSPAKKKLSNATALRVRHSPMKKLSNASRLRANAHRPTQHKDERRSGVLSVIQRNRLSKDLTPRQKVQEVLRIFTLVFDELDRNKAARRGGSETAKSRIDYQTWTILREMGMQVNSQKRIGSVPGIKVGDKIQFKAALSVIGLHFGIMSGIDYMYKGNKEVATSIVSSEGNDYGDRFINDVMIYCGQGGNMRSKDHKAIKDQKLVGGNLALANSIKEKTPVRVIRGERRLDNRGKDYVYDGLYRVEKYWEERGPQGNILFKFKLRRTCQPYVDF.

The disordered stretch occupies residues 163-186; that stretch reads KKLSNASRLRANAHRPTQHKDERR. The 146-residue stretch at 262-407 folds into the YDG domain; that stretch reads GSVPGIKVGD…NILFKFKLRR (146 aa).

Its subcellular location is the nucleus. This Arabidopsis thaliana (Mouse-ear cress) protein is YDG domain-containing protein At5g47160.